Here is a 413-residue protein sequence, read N- to C-terminus: Serine/threonine transporter SstT (413 aa).

8 helical membrane-spanning segments follow: residues 19–39 (IFIGLILGLLVALVTPTLQNV), 61–81 (AVAPILIFVLVMAAIANKKIG), 89–109 (IIVLYLLGTFLAALSAVIAGF), 148–168 (ALFKANFVGVLAWSIGLGLAL), 189–209 (IVYVIIAFAPIGVFGLVSETL), 223–243 (LLAVLVGTMLFVAFVVNPILV), 297–317 (IPLGATINMAGAAITVTILTL), and 325–345 (IQISFFSALLLSVVASICACG).

The protein belongs to the dicarboxylate/amino acid:cation symporter (DAACS) (TC 2.A.23) family.

Its subcellular location is the cell inner membrane. The catalysed reaction is L-serine(in) + Na(+)(in) = L-serine(out) + Na(+)(out). It catalyses the reaction L-threonine(in) + Na(+)(in) = L-threonine(out) + Na(+)(out). In terms of biological role, involved in the import of serine and threonine into the cell, with the concomitant import of sodium (symport system). The chain is Serine/threonine transporter SstT from Pasteurella multocida (strain Pm70).